The following is a 632-amino-acid chain: Threonine--tRNA ligase (632 aa).

One can recognise a TGS domain in the interval 1–59 (MIRITFLAKQKVEEYSSRVTGFDILQPDISKEAIALRVNGELYDLSREIESDTEIDVIQ). Residues 240 to 532 (DHRRIAKDMD…LIEHYAGKFP (293 aa)) are catalytic. Residues cysteine 332, histidine 383, and histidine 509 each contribute to the Zn(2+) site.

The protein belongs to the class-II aminoacyl-tRNA synthetase family. In terms of assembly, homodimer. Zn(2+) serves as cofactor.

It localises to the cytoplasm. It carries out the reaction tRNA(Thr) + L-threonine + ATP = L-threonyl-tRNA(Thr) + AMP + diphosphate + H(+). Its function is as follows. Catalyzes the attachment of threonine to tRNA(Thr) in a two-step reaction: L-threonine is first activated by ATP to form Thr-AMP and then transferred to the acceptor end of tRNA(Thr). Also edits incorrectly charged L-seryl-tRNA(Thr). The polypeptide is Threonine--tRNA ligase (Wolbachia sp. subsp. Brugia malayi (strain TRS)).